Reading from the N-terminus, the 102-residue chain is ATP-dependent Clp protease adapter protein ClpS (102 aa).

This sequence belongs to the ClpS family. As to quaternary structure, binds to the N-terminal domain of the chaperone ClpA.

In terms of biological role, involved in the modulation of the specificity of the ClpAP-mediated ATP-dependent protein degradation. The protein is ATP-dependent Clp protease adapter protein ClpS of Nitrosospira multiformis (strain ATCC 25196 / NCIMB 11849 / C 71).